Reading from the N-terminus, the 258-residue chain is Phosphonates import ATP-binding protein PhnC 3 (258 aa).

The 245-residue stretch at 2–246 (IEFKNVSLVY…TFEEIYGRKI (245 aa)) folds into the ABC transporter domain. 35–42 (GLSGAGKS) is a binding site for ATP.

The protein belongs to the ABC transporter superfamily. Phosphonates importer (TC 3.A.1.9.1) family. The complex is composed of two ATP-binding proteins (PhnC), two transmembrane proteins (PhnE) and a solute-binding protein (PhnD).

Its subcellular location is the cell membrane. The enzyme catalyses phosphonate(out) + ATP + H2O = phosphonate(in) + ADP + phosphate + H(+). Part of the ABC transporter complex PhnCDE involved in phosphonates import. Responsible for energy coupling to the transport system. This chain is Phosphonates import ATP-binding protein PhnC 3, found in Halalkalibacterium halodurans (strain ATCC BAA-125 / DSM 18197 / FERM 7344 / JCM 9153 / C-125) (Bacillus halodurans).